Here is a 719-residue protein sequence, read N- to C-terminus: Penicillin-binding protein 1A (719 aa).

Residues Leu62–Glu223 are transglycosylase. Glu91 functions as the Proton donor; for transglycosylase activity in the catalytic mechanism. The tract at residues Asp297–Leu611 is transpeptidase. Ser370 serves as the catalytic Acyl-ester intermediate; for transpeptidase activity. The disordered stretch occupies residues Ala652–Pro719. Residues Ser654–Pro719 show a composition bias toward low complexity.

In the N-terminal section; belongs to the glycosyltransferase 51 family. The protein in the C-terminal section; belongs to the transpeptidase family. Interacts with MreC in the elongasome.

It is found in the secreted. The enzyme catalyses [GlcNAc-(1-&gt;4)-Mur2Ac(oyl-L-Ala-gamma-D-Glu-L-Lys-D-Ala-D-Ala)](n)-di-trans,octa-cis-undecaprenyl diphosphate + beta-D-GlcNAc-(1-&gt;4)-Mur2Ac(oyl-L-Ala-gamma-D-Glu-L-Lys-D-Ala-D-Ala)-di-trans,octa-cis-undecaprenyl diphosphate = [GlcNAc-(1-&gt;4)-Mur2Ac(oyl-L-Ala-gamma-D-Glu-L-Lys-D-Ala-D-Ala)](n+1)-di-trans,octa-cis-undecaprenyl diphosphate + di-trans,octa-cis-undecaprenyl diphosphate + H(+). It carries out the reaction Preferential cleavage: (Ac)2-L-Lys-D-Ala-|-D-Ala. Also transpeptidation of peptidyl-alanyl moieties that are N-acyl substituents of D-alanine.. Its pathway is cell wall biogenesis; peptidoglycan biosynthesis. In terms of biological role, cell wall formation. The sequence is that of Penicillin-binding protein 1A (pbpA) from Streptococcus pneumoniae (strain ATCC BAA-255 / R6).